The following is an 81-amino-acid chain: ATP synthase subunit c (81 aa).

2 consecutive transmembrane segments (helical) span residues 6–26 (AAAS…GPGI) and 57–77 (LAFM…LLFA).

It belongs to the ATPase C chain family. F-type ATPases have 2 components, F(1) - the catalytic core - and F(0) - the membrane proton channel. F(1) has five subunits: alpha(3), beta(3), gamma(1), delta(1), epsilon(1). F(0) has four main subunits: a(1), b(1), b'(1) and c(10-14). The alpha and beta chains form an alternating ring which encloses part of the gamma chain. F(1) is attached to F(0) by a central stalk formed by the gamma and epsilon chains, while a peripheral stalk is formed by the delta, b and b' chains.

It localises to the cellular thylakoid membrane. Functionally, f(1)F(0) ATP synthase produces ATP from ADP in the presence of a proton or sodium gradient. F-type ATPases consist of two structural domains, F(1) containing the extramembraneous catalytic core and F(0) containing the membrane proton channel, linked together by a central stalk and a peripheral stalk. During catalysis, ATP synthesis in the catalytic domain of F(1) is coupled via a rotary mechanism of the central stalk subunits to proton translocation. Its function is as follows. Key component of the F(0) channel; it plays a direct role in translocation across the membrane. A homomeric c-ring of between 10-14 subunits forms the central stalk rotor element with the F(1) delta and epsilon subunits. This chain is ATP synthase subunit c, found in Picosynechococcus sp. (strain ATCC 27264 / PCC 7002 / PR-6) (Agmenellum quadruplicatum).